Consider the following 450-residue polypeptide: C4-dicarboxylate transport protein (450 aa).

The next 9 helical transmembrane spans lie at 10–30 (SLYF…HFYP), 46–66 (LIKM…IAGM), 78–98 (YALL…LIVV), 143–163 (IVGA…VIFG), 190–210 (IINM…AFTI), 224–244 (LMIC…GAIA), 291–311 (VVGL…SIYL), 332–352 (ITLL…TGSG), and 354–374 (IVLA…LALI). The segment at 428–450 (PEDDLGVAEGPTPGAAVNTTKTV) is disordered.

Belongs to the dicarboxylate/amino acid:cation symporter (DAACS) (TC 2.A.23) family.

It localises to the cell inner membrane. Its function is as follows. Responsible for the transport of dicarboxylates such as succinate, fumarate, and malate from the periplasm across the membrane. This chain is C4-dicarboxylate transport protein, found in Pseudomonas syringae pv. syringae (strain B728a).